Here is a 539-residue protein sequence, read N- to C-terminus: Trigger factor (539 aa).

The PPIase FKBP-type domain maps to 163-252 (GDQLTVQIET…VLDVQERLLP (90 aa)). 2 stretches are compositionally biased toward low complexity: residues 434 to 447 (SFEQ…ASEP) and 475 to 484 (AASPEAASEP). The disordered stretch occupies residues 434-539 (SFEQAASPEA…DVATPEARTE (106 aa)). A compositionally biased stretch (polar residues) spans 509–528 (TETPIVSQEENGESVENQSV).

It belongs to the FKBP-type PPIase family. Tig subfamily.

The protein resides in the cytoplasm. It carries out the reaction [protein]-peptidylproline (omega=180) = [protein]-peptidylproline (omega=0). In terms of biological role, involved in protein export. Acts as a chaperone by maintaining the newly synthesized protein in an open conformation. Functions as a peptidyl-prolyl cis-trans isomerase. The protein is Trigger factor of Roseiflexus sp. (strain RS-1).